A 343-amino-acid polypeptide reads, in one-letter code: T-cell immunoglobulin and mucin domain-containing protein 4 (343 aa).

The signal sequence occupies residues 1-22 (MSKGLLLLWLVTELWWLYLTPA). The 106-residue stretch at 23–128 (ASEDTIIGFL…WFNDVKKNVR (106 aa)) folds into the Ig-like V-type domain. At 23–279 (ASEDTIIGFL…KSHQINSRQT (257 aa)) the chain is on the extracellular side. 3 disulfides stabilise this stretch: Cys40-Cys112, Cys53-Cys64, and Cys59-Cys111. N-linked (GlcNAc...) asparagine glycosylation is present at Asn220. The disordered stretch occupies residues 239-258 (TGSNPGILPSTSQLTTQKTT). Residues 248–258 (STSQLTTQKTT) show a composition bias toward low complexity. The chain crosses the membrane as a helical span at residues 280–300 (ILIIACCVGFVLMVLLFLAFL). The Cytoplasmic segment spans residues 301 to 343 (LRGKVTGANCLQRHKRPDNTEDSDSVLNDMSHGRDDEDGIFTL). The segment at 313–343 (RHKRPDNTEDSDSVLNDMSHGRDDEDGIFTL) is disordered. 3 positions are modified to phosphoserine: Ser323, Ser325, and Ser331.

The protein belongs to the immunoglobulin superfamily. TIM family. As to quaternary structure, homodimer. In terms of tissue distribution, predominantly expressed in lymphoid tissues, such as spleen, lymph nodes, and Peyer patches. Also expressed in fetal liver, salivary gland, and spleen stromal cells, predominantly in the marginal zone and to a lesser extent throughout the white pulp. Not expressed in bone marrow-derived cells. Expressed mainly by antigen presenting cells (APCs) in T- and B-cell areas, but not by T- or B-lymphocytes.

Its subcellular location is the membrane. Its function is as follows. Phosphatidylserine receptor that plays different role in immune response including phagocytosis of apoptotic cells and T-cell regulation. Controls T-cell activation in a bimodal fashion, decreasing the activation of naive T-cells by inducing cell cycle arrest, while increasing proliferation of activated T-cells by activating AKT1 and ERK1/2 phosphorylations and subsequent signaling pathways. Also plays a role in efferocytosis which is the process by which apoptotic cells are removed by phagocytic cells. Mechanistically, promotes the engulfment of apoptotic cells or exogenous particles by securing them to phagocytes through direct binding to phosphatidylserine present on apoptotic cells, while other engulfment receptors such as MERTK efficiently recognize apoptotic cells and mediate their ingestion. Additionally, promotes autophagy process by suppressing NLRP3 inflammasome activity via activation of STK11/PRKAA1 pathway in a phosphatidylserine-dependent mechanism. This is T-cell immunoglobulin and mucin domain-containing protein 4 (Timd4) from Mus musculus (Mouse).